The following is a 261-amino-acid chain: Gap junction beta-6 protein (261 aa).

At 1–22 the chain is on the cytoplasmic side; it reads MDWGTLHTVIGGVNKHSTSIGK. A helical membrane pass occupies residues 23-45; that stretch reads VWITVIFIFRVMILVVAAQEVWG. At 46–75 the chain is on the extracellular side; that stretch reads DEQEDFVCNTLQPGCKNVCYDHFFPVSHIR. A helical membrane pass occupies residues 76 to 98; sequence LWALQLIFVSTPALLVAMHVAYY. Over 99-131 the chain is Cytoplasmic; it reads RHETARKFIRGEKRNEFKDLEDIKRQKVRIEGS. A helical transmembrane segment spans residues 132 to 154; sequence LWWTYTSSIFFRIIFEAAFMYVF. Topologically, residues 155–192 are extracellular; that stretch reads YFLYNGYHLPWVLKCGIDPCPNLVDCFISRPTEKTVFT. The helical transmembrane segment at 193–215 threads the bilayer; that stretch reads VFMISASVICMLLNVAELCYLLL. Residues 216–261 are Cytoplasmic-facing; sequence KLCFRRSKRTQAQRNHPNHALKESKQNEMNELISDSGQNAITSFPS.

This sequence belongs to the connexin family. Beta-type (group I) subfamily. In terms of assembly, a connexon is composed of a hexamer of connexins. Interacts with CNST. As to expression, highly expressed in adult brain and skin. Less in uterus, lung and eye. Very low in testis and sciatic nerve. No expression before birth.

The protein resides in the cell membrane. It is found in the cell junction. Its subcellular location is the gap junction. In terms of biological role, one gap junction consists of a cluster of closely packed pairs of transmembrane channels, the connexons, through which materials of low MW diffuse from one cell to a neighboring cell. The chain is Gap junction beta-6 protein (Gjb6) from Mus musculus (Mouse).